The sequence spans 54 residues: Lectin alpha chain (54 aa).

This sequence belongs to the leguminous lectin family. Tetramer of two alpha and two beta chains.

This chain is Lectin alpha chain, found in Lathyrus odoratus (Sweet pea).